The following is a 399-amino-acid chain: MSKWDSNIPFLFFSNKKITMIKECQNPPHFRVVTDNTALLEVCNLAQQKSAVALDTEFMRVSTYFPKLGLIQLYDGEHVSLIDPLAITDFSPFVALLANPKVLKILHSCSEDLLVFLQEFDQLPRPMIDTQIMARFLGLGTSAGLAKLAQQYLNVEIDKGATRTNWIKRPLSDIQLQYAAGDVWYLLPLYHILEKELAKTPWEQAVRDDCELVLAKTHKLQERDSEKAYLDIPNAWKLNPLELSRLRVLAQWRQNVAIERDLALSYIVKSEHLWKVAKNNPRNTSEMLEMGLTENEVRVRGKEILQLLSQARRISSNDYPKSIERISEDPRYKKTIRLLQEKVNSLTPEGLTPEIVASKRTLEELIKWVWKYDCSQDKRPELLIGWRKPIGEKLVDALK.

The 167-residue stretch at 31–197 folds into the 3'-5' exonuclease domain; the sequence is RVVTDNTALL…PLYHILEKEL (167 aa). The HRDC domain occupies 239–318; the sequence is NPLELSRLRV…SQARRISSND (80 aa).

The protein belongs to the RNase D family. A divalent metal cation serves as cofactor.

It is found in the cytoplasm. It carries out the reaction Exonucleolytic cleavage that removes extra residues from the 3'-terminus of tRNA to produce 5'-mononucleotides.. In terms of biological role, exonuclease involved in the 3' processing of various precursor tRNAs. Initiates hydrolysis at the 3'-terminus of an RNA molecule and releases 5'-mononucleotides. This Haemophilus influenzae (strain ATCC 51907 / DSM 11121 / KW20 / Rd) protein is Ribonuclease D.